We begin with the raw amino-acid sequence, 275 residues long: Dermonecrotic toxin LhSicTox-alphaVI1i (275 aa).

H5 is a catalytic residue. 2 residues coordinate Mg(2+): E25 and D27. The Nucleophile role is filled by H41. Intrachain disulfides connect C45/C51 and C47/C192. D85 contacts Mg(2+).

It belongs to the arthropod phospholipase D family. Class II subfamily. Mg(2+) serves as cofactor. As to expression, expressed by the venom gland.

It is found in the secreted. The enzyme catalyses an N-(acyl)-sphingosylphosphocholine = an N-(acyl)-sphingosyl-1,3-cyclic phosphate + choline. It catalyses the reaction an N-(acyl)-sphingosylphosphoethanolamine = an N-(acyl)-sphingosyl-1,3-cyclic phosphate + ethanolamine. It carries out the reaction a 1-acyl-sn-glycero-3-phosphocholine = a 1-acyl-sn-glycero-2,3-cyclic phosphate + choline. The catalysed reaction is a 1-acyl-sn-glycero-3-phosphoethanolamine = a 1-acyl-sn-glycero-2,3-cyclic phosphate + ethanolamine. In terms of biological role, dermonecrotic toxins cleave the phosphodiester linkage between the phosphate and headgroup of certain phospholipids (sphingolipid and lysolipid substrates), forming an alcohol (often choline) and a cyclic phosphate. This toxin acts on sphingomyelin (SM). It may also act on ceramide phosphoethanolamine (CPE), lysophosphatidylcholine (LPC) and lysophosphatidylethanolamine (LPE), but not on lysophosphatidylserine (LPS), and lysophosphatidylglycerol (LPG). It acts by transphosphatidylation, releasing exclusively cyclic phosphate products as second products. Induces dermonecrosis, hemolysis, increased vascular permeability, edema, inflammatory response, and platelet aggregation. The chain is Dermonecrotic toxin LhSicTox-alphaVI1i from Loxosceles hirsuta (Recluse spider).